The following is a 127-amino-acid chain: MMGYFWALMSVLLVSGAQLMMKWAMVSLPPVGQTDALMSAFMSVTPGAVALVIGLFAYVFSMGCWYMALRRIALSKAYPLLSLSYVLVWAAAIGLPWLHEPFSVGKLAGVSVIFVGLLLVCLPDKKS.

A helical transmembrane segment spans residues 1 to 21; the sequence is MMGYFWALMSVLLVSGAQLMM. Residues 22–48 are Periplasmic-facing; sequence KWAMVSLPPVGQTDALMSAFMSVTPGA. Residues 49 to 69 traverse the membrane as a helical segment; that stretch reads VALVIGLFAYVFSMGCWYMAL. Residues 70–77 lie on the Cytoplasmic side of the membrane; sequence RRIALSKA. A helical transmembrane segment spans residues 78–98; sequence YPLLSLSYVLVWAAAIGLPWL. At 99 to 101 the chain is on the periplasmic side; sequence HEP. Residues 102 to 122 form a helical membrane-spanning segment; that stretch reads FSVGKLAGVSVIFVGLLLVCL. The Cytoplasmic portion of the chain corresponds to 123 to 127; it reads PDKKS.

This sequence belongs to the ArnF family. As to quaternary structure, heterodimer of ArnE and ArnF.

It localises to the cell inner membrane. It participates in bacterial outer membrane biogenesis; lipopolysaccharide biosynthesis. Functionally, translocates 4-amino-4-deoxy-L-arabinose-phosphoundecaprenol (alpha-L-Ara4N-phosphoundecaprenol) from the cytoplasmic to the periplasmic side of the inner membrane. This chain is Probable 4-amino-4-deoxy-L-arabinose-phosphoundecaprenol flippase subunit ArnF, found in Enterobacter sp. (strain 638).